Here is a 185-residue protein sequence, read N- to C-terminus: UPF0301 protein Csal_0058 (185 aa).

This sequence belongs to the UPF0301 (AlgH) family.

This is UPF0301 protein Csal_0058 from Chromohalobacter salexigens (strain ATCC BAA-138 / DSM 3043 / CIP 106854 / NCIMB 13768 / 1H11).